A 541-amino-acid chain; its full sequence is MSKLIAFDQEAREGLQKGVDALADAVKVTLGPRGRNVVLDKAFGGPTVTNDGVTIARDIDLEDPFENLGAQLVKSVAIKTNDIAGDGTTTATLLAQALVNEGLRTVAAGANPIAVNRGIAKGTERVVELLRELAQPVADNAAIANVATVSSRDEKIGAMVADAFDKVGKDGVVTVEESQSIEDESIVTEGVSFDKGYLSPYFVTDQETGHAELENPLILLVREKISSLPDFLPVLEKVANSGKPLLIVAEDIEGEPLQMLVLNAIRKSLKVAAVKSPYFGDRRSAFMDDLAIVTGGTVIDSELGHKLSETTLEQLGSARRVNITKEETVLVDGAGSAEAVEERRNQIRNDIERTDSSWDKEKFEERLAKLSGGVAVIRAGGATETEVNERKLRIEDAINAARAAGQEGVIAGGGSVLVQIADEIEELSRKEEGDEGIGLRSLARALRRPAYWIADNAGLDGAVVVSKIAEQPNGSGFNAATLEYGNLLEQGIIDPVKVTHSAVVNATSVARMVLTTETAVVDKPAAPAGQAGAHAGHAHAH.

ATP-binding positions include 29–32 (TLGP), 86–90 (DGTTT), G413, 478–480 (NAA), and D494.

It belongs to the chaperonin (HSP60) family. In terms of assembly, forms a cylinder of 14 subunits composed of two heptameric rings stacked back-to-back. Interacts with the co-chaperonin GroES.

It localises to the cytoplasm. It carries out the reaction ATP + H2O + a folded polypeptide = ADP + phosphate + an unfolded polypeptide.. Functionally, together with its co-chaperonin GroES, plays an essential role in assisting protein folding. The GroEL-GroES system forms a nano-cage that allows encapsulation of the non-native substrate proteins and provides a physical environment optimized to promote and accelerate protein folding. This chain is Chaperonin GroEL 2, found in Corynebacterium jeikeium (strain K411).